A 201-amino-acid chain; its full sequence is Zinc finger protein 239 (201 aa).

7 C2H2-type zinc fingers span residues 6–28, 34–56, 62–84, 90–112, 118–140, 146–168, and 174–196; these read YKCD…HSVH, FKCD…KRVH, YACE…QRVH, YKCG…RCTH, YQCY…LRVH, YHCG…QRVH, and YECS…QRVH.

This sequence belongs to the krueppel C2H2-type zinc-finger protein family. In terms of tissue distribution, preferentially expressed in transformed mouse cells.

The protein resides in the nucleus. May be involved in transcriptional regulation. This Mus musculus (Mouse) protein is Zinc finger protein 239 (Znf239).